The sequence spans 260 residues: 14-3-3-like protein C (260 aa).

Belongs to the 14-3-3 family.

The protein is 14-3-3-like protein C of Nicotiana tabacum (Common tobacco).